A 367-amino-acid chain; its full sequence is Cystinosin (367 aa).

A signal peptide spans 1 to 22 (MIRRWLVIFILFPLQLIEKCES). Residues 23–125 (TVDFSVPPIV…LVIHSNIVSI (103 aa)) are Lumenal-facing. N-linked (GlcNAc...) asparagine glycosylation is found at asparagine 51, asparagine 66, asparagine 84, asparagine 104, and asparagine 107. A PQ-loop 1 domain is found at 123 to 189 (VSIINQVIGW…LFWVPSIKEQ (67 aa)). A helical transmembrane segment spans residues 126–150 (INQVIGWIYFVAWSVSFYPQVITNW). Residues 151–159 (RRKSVVGLS) are Cytoplasmic-facing. A helical membrane pass occupies residues 160–179 (FDFVVLNLMGFVAYSVFNIG). Asparagine 166 contributes to the L-cystine binding site. Residues 180–202 (LFWVPSIKEQFLLKYPNGVNPVD) lie on the Lumenal side of the membrane. A helical transmembrane segment spans residues 203-225 (SNDVFFSLHAVALTLVVIVQCLL). A H(+)-binding site is contributed by aspartate 205. Over 226 to 234 (YERGSQRVS) the chain is Cytoplasmic. Residues 235–257 (WLAISFLVLSWLFTLIALIMAAV) form a helical membrane-spanning segment. At 258–263 (GATTWL) the chain is on the lumenal side. The PQ-loop 2 domain occupies 263-328 (LQFLFCFSYI…QSYNNDQWTL (66 aa)). A helical transmembrane segment spans residues 264-289 (QFLFCFSYIKLAVTLVKYFPQAYMNF). 3 residues coordinate L-cystine: lysine 273, lysine 280, and tyrosine 281. Residues 290–298 (HYKSTEGWS) are Cytoplasmic-facing. The chain crosses the membrane as a helical span at residues 299 to 308 (IGNVLLDFTG). The L-cystine site is built by asparagine 301 and aspartate 305. Aspartate 305 contacts H(+). Topologically, residues 309-331 (GSFSLLQMFLQSYNNDQWTLIFG) are lumenal. A helical membrane pass occupies residues 332–354 (DPTKFGLGIFSIIFDVVFFIQHF). Aspartate 346 provides a ligand contact to H(+). The Cytoplasmic portion of the chain corresponds to 355–367 (CLYRKKPGYDQLN). The Lysosomal targeting motif motif lies at 362–366 (GYDQL).

It belongs to the cystinosin family. In terms of assembly, interacts with components of the V-ATPase complex. Interacts with components of the Ragulator complex. Interacts with RRAGA/RagA and RRAGC/RagC. Interacts with AP-3 complex subunit mu (AP3M1 or AP3M2).

The protein localises to the lysosome membrane. Its subcellular location is the melanosome membrane. It carries out the reaction L-cystine(out) + H(+)(out) = L-cystine(in) + H(+)(in). With respect to regulation, switches between a lumen- and a cytosol-open conformation: pH induces conformational changes and shifts the equilibrium to facilitate the transition between the lumen- and cytosol-open conformation, thereby promoting cystine transport. Protonation of specific aspartate residues (Asp-205, Asp-305 and Asp-346) favors the cytosol-open conformation. In terms of biological role, cystine/H(+) symporter that mediates export of cystine, the oxidized dimer of cysteine, from lysosomes. Plays an important role in melanin synthesis by catalyzing cystine export from melanosomes, possibly by inhibiting pheomelanin synthesis. In addition to cystine export, also acts as a positive regulator of mTORC1 signaling in kidney proximal tubular cells, via interactions with components of the v-ATPase and Ragulator complexes. Also involved in small GTPase-regulated vesicle trafficking and lysosomal localization of LAMP2A, independently of cystine transporter activity. In Bos taurus (Bovine), this protein is Cystinosin.